The chain runs to 180 residues: dCTP deaminase, dUMP-forming (180 aa).

Residues 96-101 (RSSLGR), aspartate 113, 121-123 (TLE), glutamine 142, tyrosine 156, and glutamine 163 contribute to the dCTP site. Residue glutamate 123 is the Proton donor/acceptor of the active site.

The protein belongs to the dCTP deaminase family. Homotrimer.

The enzyme catalyses dCTP + 2 H2O = dUMP + NH4(+) + diphosphate. The protein operates within pyrimidine metabolism; dUMP biosynthesis; dUMP from dCTP: step 1/1. Its function is as follows. Bifunctional enzyme that catalyzes both the deamination of dCTP to dUTP and the hydrolysis of dUTP to dUMP without releasing the toxic dUTP intermediate. The polypeptide is dCTP deaminase, dUMP-forming (Aquifex aeolicus (strain VF5)).